A 171-amino-acid polypeptide reads, in one-letter code: Putative rhomboid protein L523 (171 aa).

The next 4 helical transmembrane spans lie at 3 to 23 (YVTYIVLLILVVIFFSPLNFF), 67 to 87 (FAFCIIFIWILSSMLLLAEHT), 94 to 114 (VYTVGFSGVIFGLIVVYLMSL), and 119 to 139 (GLSIAGLVLSIIPQFFVSGIS). Serine 100 serves as the catalytic Nucleophile. The active site involves histidine 143. Residues 144-164 (ICGMIAGFVYVVLFPLPKGSV) form a helical membrane-spanning segment.

The protein belongs to the peptidase S54 family.

It localises to the membrane. Probable serine protease. This chain is Putative rhomboid protein L523, found in Acanthamoeba polyphaga mimivirus (APMV).